We begin with the raw amino-acid sequence, 218 residues long: Peptide methionine sulfoxide reductase MsrA (218 aa).

Cys57 is an active-site residue.

The protein belongs to the MsrA Met sulfoxide reductase family.

It carries out the reaction L-methionyl-[protein] + [thioredoxin]-disulfide + H2O = L-methionyl-(S)-S-oxide-[protein] + [thioredoxin]-dithiol. The catalysed reaction is [thioredoxin]-disulfide + L-methionine + H2O = L-methionine (S)-S-oxide + [thioredoxin]-dithiol. Functionally, has an important function as a repair enzyme for proteins that have been inactivated by oxidation. Catalyzes the reversible oxidation-reduction of methionine sulfoxide in proteins to methionine. The sequence is that of Peptide methionine sulfoxide reductase MsrA from Brucella anthropi (Ochrobactrum anthropi).